The primary structure comprises 374 residues: Type IV secretion system protein PtlG homolog (374 aa).

A helical membrane pass occupies residues 38-56 (WMFALVAVALSCLLATGIW). Positions 87–116 (PREPEPAPLPDMPAAPNPILPQPRPAPPVP) are disordered. A compositionally biased stretch (pro residues) spans 92-116 (PAPLPDMPAAPNPILPQPRPAPPVP).

It belongs to the TrbI/VirB10 family.

The protein localises to the cell membrane. The protein is Type IV secretion system protein PtlG homolog (ptlG) of Bordetella parapertussis (strain 12822 / ATCC BAA-587 / NCTC 13253).